We begin with the raw amino-acid sequence, 385 residues long: Acyl-CoA dehydrogenase IpdE1 (385 aa).

FAD-binding positions include 126 to 129 and S161; that span reads QGYS. E244 functions as the Proton acceptor in the catalytic mechanism. FAD is bound at residue 364 to 366; the sequence is SNE.

It belongs to the acyl-CoA dehydrogenase family. As to quaternary structure, heterotetramer composed of 2 IpdE1 subunits and 2 IpdE2 subunits. It depends on FAD as a cofactor.

It carries out the reaction 3-[(3aS,4S,5R,7aS)-5-hydroxy-7a-methyl-1-oxo-octahydro-1H-inden-4-yl]propanoyl-CoA + A = (2E)-3-[(3aS,4S,5R,7aS)-5-hydroxy-7a-methyl-1-oxo-octahydro-1H-inden-4-yl]prop-2-enoyl-CoA + AH2. Its pathway is steroid metabolism; cholesterol degradation. Involved in cholesterol degradation. Catalyzes the dehydrogenation of 5OH-HIP-CoA to 5OH-HIPE-CoA. Can also use octanoyl-CoA and dihydroferuloyl-CoA, with lower efficiency. Cannot use 3-oxo-4-pregnene-20-carboxyl-CoA (3-OPC-CoA). This Mycobacterium tuberculosis (strain ATCC 25618 / H37Rv) protein is Acyl-CoA dehydrogenase IpdE1.